The sequence spans 379 residues: Cytochrome b (379 aa).

The next 4 helical transmembrane spans lie at 33–53, 77–98, 113–133, and 178–198; these read FGSL…FLAM, WLIR…YLHI, WNIG…GYVL, and FFAF…IHLL. Heme b is bound by residues H83 and H97. Residues H182 and H196 each contribute to the heme b site. H201 is a binding site for a ubiquinone. The next 4 membrane-spanning stretches (helical) occupy residues 226 to 246, 288 to 308, 320 to 340, and 347 to 367; these read YKDL…ALFY, LGGV…PILH, ASQL…WIGG, and YIII…VLNP.

It belongs to the cytochrome b family. In terms of assembly, the cytochrome bc1 complex contains 3 respiratory subunits (MT-CYB, CYC1 and UQCRFS1), 2 core proteins (UQCRC1 and UQCRC2) and probably 6 low-molecular weight proteins. Requires heme b as cofactor.

It localises to the mitochondrion inner membrane. Component of the ubiquinol-cytochrome c reductase complex (complex III or cytochrome b-c1 complex) that is part of the mitochondrial respiratory chain. The b-c1 complex mediates electron transfer from ubiquinol to cytochrome c. Contributes to the generation of a proton gradient across the mitochondrial membrane that is then used for ATP synthesis. The protein is Cytochrome b (mt-cyb) of Anguilla reinhardtii (Speckled longfin eel).